The primary structure comprises 160 residues: Large ribosomal subunit protein uL16 (160 aa).

Belongs to the universal ribosomal protein uL16 family. Part of the 50S ribosomal subunit.

Functionally, binds 23S rRNA and is also seen to make contacts with the A and possibly P site tRNAs. The polypeptide is Large ribosomal subunit protein uL16 (Prochlorococcus marinus (strain MIT 9301)).